A 340-amino-acid polypeptide reads, in one-letter code: Deubiquitinase SseL (340 aa).

Histidine 223 is a catalytic residue. The active-site Nucleophile is cysteine 285.

The protein belongs to the peptidase C79 family.

Its subcellular location is the secreted. It localises to the host cytoplasm. Effector proteins function to alter host cell physiology and promote bacterial survival in host tissues. This protease targets the host cell ubiquitin pathway by acting as a deubiquitinase in infected host cells. The polypeptide is Deubiquitinase SseL (sseL) (Salmonella choleraesuis (strain SC-B67)).